The sequence spans 825 residues: Taste receptor cell protein 1 (825 aa).

A signal peptide spans 1-21 (MDKQWFPAAGILLAALLVVSA). Disordered regions lie at residues 66 to 97 (EREP…GPSG) and 299 to 322 (TSPS…SASP). The span at 302 to 322 (SQASSLHSPRPSSASPLSASP) shows a compositional bias: low complexity.

Expression is restricted to circumvallate papillae.

This Mus musculus (Mouse) protein is Taste receptor cell protein 1 (Trcg1).